The following is a 110-amino-acid chain: uncharacterized protein (110 aa).

3 helical membrane-spanning segments follow: residues Val32–Pro52, Tyr57–Ile77, and Phe90–Ile110.

The protein localises to the membrane. Its function is as follows. May play a role in proper chromosome segregation. Suppresses the high-frequency loss of mini-chromosomes when overexpressed, and this suppression is completely dependent on silencing protein SIR4. This is an uncharacterized protein from Saccharomyces cerevisiae (strain ATCC 204508 / S288c) (Baker's yeast).